Reading from the N-terminus, the 478-residue chain is 9-divinyl ether synthase (478 aa).

Cysteine 431 contributes to the heme binding site.

It belongs to the cytochrome P450 family. 9-divinyl ether synthase subfamily.

It catalyses the reaction (9S)-hydroperoxy-(10E,12Z)-octadecadienoate = colneleate + H2O. Functionally, involved in the biosynthesis of the anti-fungal toxins colneleic acid and colnelenic acid. The polypeptide is 9-divinyl ether synthase (DES) (Capsicum annuum (Capsicum pepper)).